The following is an 846-amino-acid chain: cGMP-dependent protein kinase (846 aa).

The autoinhibitory segment stretch occupies residues 1 to 22 (MRCNERNKKKAIFSNDDFSGED). 4 cNMP-binding domain regions span residues 51–166 (VCST…FIDS), 169–268 (VFDM…IVLG), 288–391 (IFRQ…LGDN), and 411–510 (IFRY…LQII). 6 residues coordinate 3',5'-cyclic GMP: Lys-106, Gly-115, Glu-116, Ala-118, Arg-125, and Ser-126. 3',5'-cyclic GMP is bound by residues Arg-466, Gly-475, Glu-476, Ala-478, Arg-485, and Thr-486. The Protein kinase domain occupies 534–791 (LETERIIGRG…FKDIKEHAFF (258 aa)). ATP contacts are provided by residues 540 to 548 (IGRGTFGTV) and Lys-563. The active-site Proton acceptor is the Asp-657. An AGC-kinase C-terminal domain is found at 792–846 (GNFNWDKLAGRLLEPPLVSKGETYAEDIDIKQIEEEDALNEGEPLDGDDSWDVDF). The segment at 824 to 846 (IEEEDALNEGEPLDGDDSWDVDF) is disordered. Residues 825–846 (EEEDALNEGEPLDGDDSWDVDF) are compositionally biased toward acidic residues.

This sequence belongs to the protein kinase superfamily. AGC Ser/Thr protein kinase family. cGMP subfamily. As to quaternary structure, monomer. Mg(2+) is required as a cofactor. In terms of processing, autophosphorylated.

Its subcellular location is the cytoplasm. It is found in the endoplasmic reticulum membrane. The catalysed reaction is L-seryl-[protein] + ATP = O-phospho-L-seryl-[protein] + ADP + H(+). It catalyses the reaction L-threonyl-[protein] + ATP = O-phospho-L-threonyl-[protein] + ADP + H(+). Activated by cGMP. Not activated by cAMP. cGMP binding allosterically triggers a conformational change at the alpha C-helix of cGMP-binding domain 4, which bridges the regulatory and catalytic domains, causing the capping triad, composed of Arg-477, Gln-525 and Asp-526, to form and stabilize the active conformation. The cGMP-binding domains acts cooperatively to activate PKG. In terms of biological role, serine/threonine protein kinase which acts as a downstream effector of the second messenger cGMP. Controls the release of Ca(2+) from intracellular stores by regulating phosphoinositide biosynthesis. Ca(2+) signals are essential for merozoite and sporozoite invasion and egress from host hepatocytes and erythrocytes, and, in the mosquito vector, for gametocyte activation, and ookinete and sporozoite motility. During the host liver stage, regulates the initial invasion of host hepatocytes by sporozoites by regulating sporozoite motility and microneme exocytosis. Following parasite development in the hepatocytes, required for the release of merosomes, a vesicle containing the mature merozoites. During the asexual blood stage, required for the progression from schizont to the ring stage following merozoite invasion of host erythrocytes and for merozoite egress. Regulates merozoite egress by promoting the release of exonemes and micronemes which contain proteins essential for egress. Phosphorylates CDPK1 predominantly at the late schizont stage; phosphorylation at 'Ser-64' regulates CDPK1 protein-protein interaction and phosphorylation at 'Thr-231' may regulate CDPK1 kinase activity. In the mosquito vector, required for the initiation of gametogenesis induced by xanthurenic acid, specifically the gametocyte differentiation from the crescent-shaped form to the spherical form. Required for the gliding motility of ookinetes to reach and penetrate the midgut epithelium by promoting Ca(2+)-mediated activation of CDPK1 and CDPK4. Also required for microneme secretion in ookinete by promoting Ca(2+)-mediated activation of CDPK3. This chain is cGMP-dependent protein kinase, found in Plasmodium vivax (strain Salvador I).